We begin with the raw amino-acid sequence, 236 residues long: Small ribosomal subunit protein uS3 (236 aa).

The KH type-2 domain maps to 39-107 (IRSYVLEELR…ETSLNIVEIR (69 aa)). The segment at 214–236 (ASERRATEADQSGSSSNRRRENA) is disordered.

The protein belongs to the universal ribosomal protein uS3 family. As to quaternary structure, part of the 30S ribosomal subunit. Forms a tight complex with proteins S10 and S14.

Binds the lower part of the 30S subunit head. Binds mRNA in the 70S ribosome, positioning it for translation. In Bartonella tribocorum (strain CIP 105476 / IBS 506), this protein is Small ribosomal subunit protein uS3.